Reading from the N-terminus, the 205-residue chain is Macrophage immunometabolism regulator (205 aa).

Positions 1-40 (MEVDINGVNRTNNSVPSTAEGSSPSKPDPEKPRCSSTPCS) are disordered. Residues 8-25 (VNRTNNSVPSTAEGSSPS) show a composition bias toward polar residues.

It belongs to the UNC119-binding protein family. In terms of assembly, interacts with unc119 family proteins; interaction preferentially takes place when unc119 proteins are unliganded with myristoylated proteins.

The protein localises to the cytoplasm. The protein resides in the cell projection. Its subcellular location is the cilium. May play a role in immune regulation through regulation of the macrophage function. May also play a role in trafficking of proteins via its interaction with unc119 family cargo adapters. May play a role in ciliary membrane localization. The chain is Macrophage immunometabolism regulator (macir) from Xenopus laevis (African clawed frog).